The following is a 152-amino-acid chain: 2-C-methyl-D-erythritol 2,4-cyclodiphosphate synthase (152 aa).

2 residues coordinate a divalent metal cation: Asp8 and His10. Residues 8 to 10 (DSH) and 34 to 35 (HS) contribute to the 4-CDP-2-C-methyl-D-erythritol 2-phosphate site. His42 provides a ligand contact to a divalent metal cation. 4-CDP-2-C-methyl-D-erythritol 2-phosphate-binding positions include 56 to 58 (DIG), 61 to 65 (FPDTD), 100 to 106 (LDRPKLG), and 131 to 135 (FKTSE).

Belongs to the IspF family. In terms of assembly, homotrimer. A divalent metal cation is required as a cofactor.

The catalysed reaction is 4-CDP-2-C-methyl-D-erythritol 2-phosphate = 2-C-methyl-D-erythritol 2,4-cyclic diphosphate + CMP. Its pathway is isoprenoid biosynthesis; isopentenyl diphosphate biosynthesis via DXP pathway; isopentenyl diphosphate from 1-deoxy-D-xylulose 5-phosphate: step 4/6. In terms of biological role, involved in the biosynthesis of isopentenyl diphosphate (IPP) and dimethylallyl diphosphate (DMAPP), two major building blocks of isoprenoid compounds. Catalyzes the conversion of 4-diphosphocytidyl-2-C-methyl-D-erythritol 2-phosphate (CDP-ME2P) to 2-C-methyl-D-erythritol 2,4-cyclodiphosphate (ME-CPP) with a corresponding release of cytidine 5-monophosphate (CMP). In Thermus thermophilus (strain ATCC 27634 / DSM 579 / HB8), this protein is 2-C-methyl-D-erythritol 2,4-cyclodiphosphate synthase.